Reading from the N-terminus, the 1207-residue chain is DNA-directed RNA polymerase subunit beta' (1207 aa).

Residues cysteine 60, cysteine 62, cysteine 75, and cysteine 78 each contribute to the Zn(2+) site. Mg(2+) is bound by residues aspartate 449, aspartate 451, and aspartate 453. Zn(2+) contacts are provided by cysteine 822, cysteine 896, cysteine 903, and cysteine 906.

This sequence belongs to the RNA polymerase beta' chain family. As to quaternary structure, the RNAP catalytic core consists of 2 alpha, 1 beta, 1 beta' and 1 omega subunit. When a sigma factor is associated with the core the holoenzyme is formed, which can initiate transcription. It depends on Mg(2+) as a cofactor. Zn(2+) is required as a cofactor.

The enzyme catalyses RNA(n) + a ribonucleoside 5'-triphosphate = RNA(n+1) + diphosphate. Its function is as follows. DNA-dependent RNA polymerase catalyzes the transcription of DNA into RNA using the four ribonucleoside triphosphates as substrates. The chain is DNA-directed RNA polymerase subunit beta' from Staphylococcus aureus (strain NCTC 8325 / PS 47).